Here is a 141-residue protein sequence, read N- to C-terminus: Putative pre-16S rRNA nuclease (141 aa).

Belongs to the YqgF nuclease family.

It is found in the cytoplasm. Could be a nuclease involved in processing of the 5'-end of pre-16S rRNA. The protein is Putative pre-16S rRNA nuclease of Chlorobium luteolum (strain DSM 273 / BCRC 81028 / 2530) (Pelodictyon luteolum).